A 254-amino-acid chain; its full sequence is MAAYKLVLIRHGESTWNLENRFSGWYDADLSPAGHEEAKRGGQALRDAGYEFDICFTSVQKRAIRTLWTVLDAIDQMWLPVVRTWRLNERHYGGLTGLNKAETAAKHGEAQVKIWRRSYDVPPPPMEPDHPFYSNISKDRRYADLTEDQLPSCESLKDTIARALPFWNEEIVPQIKEGKRVLIAAHGNSLRGIVKHLEGLSEEAIMELNLPTGIPMVYELDKNLKPIKPMQFLGDEETVRKAMEAVAAQGKAKK.

Residues 10 to 17 (RHGESTWN) and 23 to 24 (SG) each bind substrate. His-11 serves as the catalytic Tele-phosphohistidine intermediate. 2 positions are modified to phosphoserine: Ser-14 and Ser-23. Tyr-26 bears the Phosphotyrosine mark. Ser-31 carries the post-translational modification Phosphoserine. Substrate is bound by residues Arg-62, 89 to 92 (ERHY), and Lys-100. Glu-89 acts as the Proton donor/acceptor in catalysis. Lys-106 bears the N6-acetyllysine mark. Residue 116-117 (RR) coordinates substrate. Ser-118 carries the post-translational modification Phosphoserine. 187 to 188 (GN) contacts substrate. N6-acetyllysine; alternate is present on Lys-251. Residue Lys-251 is modified to N6-succinyllysine; alternate. An N6-acetyllysine mark is found at Lys-253 and Lys-254.

The protein belongs to the phosphoglycerate mutase family. BPG-dependent PGAM subfamily. Homodimer. Post-translationally, acetylated at Lys-253, Lys-253 and Lys-254 under high glucose condition. Acetylation increases catalytic activity. Under glucose restriction SIRT1 levels dramatically increase and it deacetylates the enzyme.

The catalysed reaction is (2R)-2-phosphoglycerate = (2R)-3-phosphoglycerate. It catalyses the reaction (2R)-3-phospho-glyceroyl phosphate = (2R)-2,3-bisphosphoglycerate + H(+). Catalyzes the interconversion of 2-phosphoglycerate and 3-phosphoglyceratea crucial step in glycolysis, by using 2,3-bisphosphoglycerate. Also catalyzes the interconversion of (2R)-2,3-bisphosphoglycerate and (2R)-3-phospho-glyceroyl phosphate. This Bos taurus (Bovine) protein is Phosphoglycerate mutase 1.